The primary structure comprises 206 residues: Urease accessory protein UreG (206 aa).

11–18 (GPVGSGKT) contributes to the GTP binding site.

The protein belongs to the SIMIBI class G3E GTPase family. UreG subfamily. In terms of assembly, homodimer. UreD, UreF and UreG form a complex that acts as a GTP-hydrolysis-dependent molecular chaperone, activating the urease apoprotein by helping to assemble the nickel containing metallocenter of UreC. The UreE protein probably delivers the nickel.

It localises to the cytoplasm. Its function is as follows. Facilitates the functional incorporation of the urease nickel metallocenter. This process requires GTP hydrolysis, probably effectuated by UreG. This Mycolicibacterium gilvum (strain PYR-GCK) (Mycobacterium gilvum (strain PYR-GCK)) protein is Urease accessory protein UreG.